The sequence spans 394 residues: NAD(P)H-quinone oxidoreductase subunit H (394 aa).

The protein belongs to the complex I 49 kDa subunit family. NDH-1 can be composed of about 15 different subunits; different subcomplexes with different compositions have been identified which probably have different functions.

It localises to the cellular thylakoid membrane. It catalyses the reaction a plastoquinone + NADH + (n+1) H(+)(in) = a plastoquinol + NAD(+) + n H(+)(out). It carries out the reaction a plastoquinone + NADPH + (n+1) H(+)(in) = a plastoquinol + NADP(+) + n H(+)(out). In terms of biological role, NDH-1 shuttles electrons from an unknown electron donor, via FMN and iron-sulfur (Fe-S) centers, to quinones in the respiratory and/or the photosynthetic chain. The immediate electron acceptor for the enzyme in this species is believed to be plastoquinone. Couples the redox reaction to proton translocation, and thus conserves the redox energy in a proton gradient. Cyanobacterial NDH-1 also plays a role in inorganic carbon-concentration. This Synechococcus sp. (strain CC9311) protein is NAD(P)H-quinone oxidoreductase subunit H.